Here is a 759-residue protein sequence, read N- to C-terminus: Protein transport protein sec23-1 (759 aa).

Zn(2+) is bound by residues C56, C60, C79, and C82.

Belongs to the SEC23/SEC24 family. SEC23 subfamily. The COPII coat is composed of at least 5 proteins: the sec23/24 complex, the sec13/31 complex, and the protein sar1.

It is found in the cytoplasm. The protein resides in the cytoplasmic vesicle. It localises to the COPII-coated vesicle membrane. The protein localises to the endoplasmic reticulum membrane. Its subcellular location is the golgi apparatus membrane. Component of the coat protein complex II (COPII) which promotes the formation of transport vesicles from the endoplasmic reticulum (ER). The coat has two main functions, the physical deformation of the endoplasmic reticulum membrane into vesicles and the selection of cargo molecules. This Schizosaccharomyces pombe (strain 972 / ATCC 24843) (Fission yeast) protein is Protein transport protein sec23-1 (sec231).